We begin with the raw amino-acid sequence, 154 residues long: Lipoprotein signal peptidase (154 aa).

Helical transmembrane passes span 8 to 28, 36 to 56, 66 to 86, and 88 to 108; these read AFFL…YWAL, IVVN…AFSF, WLFA…LLTK, and HHWL…GNLY. Active-site residues include Asp118 and Asp136. A helical membrane pass occupies residues 129 to 149; sequence WPVFNLADVAITLGVILMLIA.

Belongs to the peptidase A8 family.

The protein localises to the cell inner membrane. It carries out the reaction Release of signal peptides from bacterial membrane prolipoproteins. Hydrolyzes -Xaa-Yaa-Zaa-|-(S,diacylglyceryl)Cys-, in which Xaa is hydrophobic (preferably Leu), and Yaa (Ala or Ser) and Zaa (Gly or Ala) have small, neutral side chains.. Its pathway is protein modification; lipoprotein biosynthesis (signal peptide cleavage). Its function is as follows. This protein specifically catalyzes the removal of signal peptides from prolipoproteins. In Dichelobacter nodosus (strain VCS1703A), this protein is Lipoprotein signal peptidase.